The following is a 365-amino-acid chain: 2-aminoethylphosphonate--pyruvate transaminase (365 aa).

Lys-194 is modified (N6-(pyridoxal phosphate)lysine).

Belongs to the class-V pyridoxal-phosphate-dependent aminotransferase family. PhnW subfamily. As to quaternary structure, homodimer. The cofactor is pyridoxal 5'-phosphate.

It carries out the reaction (2-aminoethyl)phosphonate + pyruvate = phosphonoacetaldehyde + L-alanine. Involved in phosphonate degradation. This chain is 2-aminoethylphosphonate--pyruvate transaminase, found in Bacillus thuringiensis subsp. konkukian (strain 97-27).